The sequence spans 406 residues: 2,3-bisphosphoglycerate-independent phosphoglycerate mutase (406 aa).

This sequence belongs to the BPG-independent phosphoglycerate mutase family. A-PGAM subfamily.

The catalysed reaction is (2R)-2-phosphoglycerate = (2R)-3-phosphoglycerate. Its pathway is carbohydrate degradation; glycolysis; pyruvate from D-glyceraldehyde 3-phosphate: step 3/5. In terms of biological role, catalyzes the interconversion of 2-phosphoglycerate and 3-phosphoglycerate. This is 2,3-bisphosphoglycerate-independent phosphoglycerate mutase from Methanococcus maripaludis (strain C6 / ATCC BAA-1332).